The sequence spans 365 residues: DNA replication and repair protein RecF (365 aa).

Residue 30-37 (GQNGSGKT) participates in ATP binding.

This sequence belongs to the RecF family.

The protein resides in the cytoplasm. In terms of biological role, the RecF protein is involved in DNA metabolism; it is required for DNA replication and normal SOS inducibility. RecF binds preferentially to single-stranded, linear DNA. It also seems to bind ATP. The sequence is that of DNA replication and repair protein RecF from Shewanella halifaxensis (strain HAW-EB4).